Here is a 285-residue protein sequence, read N- to C-terminus: Bifunctional protein FolD (285 aa).

NADP(+)-binding positions include 165-167 (GRG), T192, and V233.

Belongs to the tetrahydrofolate dehydrogenase/cyclohydrolase family. Homodimer.

It catalyses the reaction (6R)-5,10-methylene-5,6,7,8-tetrahydrofolate + NADP(+) = (6R)-5,10-methenyltetrahydrofolate + NADPH. The enzyme catalyses (6R)-5,10-methenyltetrahydrofolate + H2O = (6R)-10-formyltetrahydrofolate + H(+). It functions in the pathway one-carbon metabolism; tetrahydrofolate interconversion. In terms of biological role, catalyzes the oxidation of 5,10-methylenetetrahydrofolate to 5,10-methenyltetrahydrofolate and then the hydrolysis of 5,10-methenyltetrahydrofolate to 10-formyltetrahydrofolate. The polypeptide is Bifunctional protein FolD (Mycobacterium sp. (strain MCS)).